The primary structure comprises 311 residues: Ribonuclease HIII (311 aa).

An RNase H type-2 domain is found at 95-311 (MSIVGSDEVG…NTEKALRLLR (217 aa)). Residues aspartate 101, glutamate 102, and aspartate 206 each coordinate a divalent metal cation.

Belongs to the RNase HII family. RnhC subfamily. Mn(2+) is required as a cofactor. It depends on Mg(2+) as a cofactor.

The protein localises to the cytoplasm. It carries out the reaction Endonucleolytic cleavage to 5'-phosphomonoester.. Endonuclease that specifically degrades the RNA of RNA-DNA hybrids. In Bacillus cereus (strain ATCC 14579 / DSM 31 / CCUG 7414 / JCM 2152 / NBRC 15305 / NCIMB 9373 / NCTC 2599 / NRRL B-3711), this protein is Ribonuclease HIII.